An 889-amino-acid chain; its full sequence is DNA-directed RNA polymerase subunit Rpo1N (889 aa).

Zn(2+) is bound by residues cysteine 62, cysteine 65, cysteine 72, histidine 75, cysteine 102, cysteine 105, cysteine 149, and cysteine 152. Positions 466, 468, and 470 each coordinate Mg(2+).

It belongs to the RNA polymerase beta' chain family. Part of the RNA polymerase complex. The cofactor is Mg(2+). Requires Zn(2+) as cofactor.

It is found in the cytoplasm. The catalysed reaction is RNA(n) + a ribonucleoside 5'-triphosphate = RNA(n+1) + diphosphate. Its function is as follows. DNA-dependent RNA polymerase (RNAP) catalyzes the transcription of DNA into RNA using the four ribonucleoside triphosphates as substrates. Forms the clamp head domain. The polypeptide is DNA-directed RNA polymerase subunit Rpo1N (Methanococcus vannielii (strain ATCC 35089 / DSM 1224 / JCM 13029 / OCM 148 / SB)).